The primary structure comprises 593 residues: Myc box-dependent-interacting protein 1 (593 aa).

Ala-2 is modified (N-acetylalanine). Residues 2–122 form an interaction with BIN2 region; sequence AEMGSKGVTA…DYHQKLVDQA (121 aa). Coiled coils occupy residues 15 to 42 and 193 to 267; these read ASNV…TKDE and HLVA…NDVL. In terms of domain architecture, BAR spans 29–276; that stretch reads VLQKLGKADE…LVGLEKQHGS (248 aa). 2 disordered regions span residues 280–354 and 400–488; these read TVKA…KEVK and PVTS…AASS. Ser-296, Ser-298, and Ser-303 each carry phosphoserine. Residues Thr-307 and Thr-323 each carry the phosphothreonine modification. Residue Ser-331 is modified to Phosphoserine. The segment at 378–421 is clathrin-binding; that stretch reads FEAPGPFSEQASLLDLDFDPLPPVTSPVKAPTPSGQSIPWDLWE. Residues 520 to 593 form the SH3 domain; sequence GFMFKVQAQH…FPENFTERVP (74 aa).

Heterodimer with AMPH. Binds SH3GLB1. Interacts (via SH3 domain) with DNM1. Interacts with SYNJ1. Interacts (via SH3 domain) with DNM2. Isoform IIA interacts with CLTC. Isoform IIB does not interact with CLTC. Isoform IIC1 does not interact with CLTC. Isoform IIC2 does not interact with CLTC. Interacts with AP2A2. Interacts with AP2B1. Interacts with MYC (via N-terminal transactivation domain); the interaction requires the integrity of the conserved MYC box regions 1 and 2. Interacts with BIN2. Interacts with SNX4. Interacts (via BAR domain) with BACE1. Binds (via BAR domain) F-actin. As to quaternary structure, (Microbial infection) Interacts (SH3 domain) with HCV NS5A. Phosphorylated by protein kinase C. In terms of tissue distribution, ubiquitous. Highest expression in the brain and muscle. Expressed in oligodendrocytes. Isoform IIA is expressed only in the brain, where it is detected in the gray matter, but not in the white matter. Isoform BIN1 is widely expressed with highest expression in skeletal muscle.

Its subcellular location is the nucleus. It is found in the cytoplasm. The protein localises to the endosome. It localises to the cell membrane. The protein resides in the sarcolemma. Its subcellular location is the T-tubule. Functionally, is a key player in the control of plasma membrane curvature, membrane shaping and membrane remodeling. Required in muscle cells for the formation of T-tubules, tubular invaginations of the plasma membrane that function in depolarization-contraction coupling. Is a negative regulator of endocytosis. Is also involved in the regulation of intracellular vesicles sorting, modulation of BACE1 trafficking and the control of amyloid-beta production. In neuronal circuits, endocytosis regulation may influence the internalization of PHF-tau aggregates. May be involved in the regulation of MYC activity and the control cell proliferation. Has actin bundling activity and stabilizes actin filaments against depolymerization in vitro. The protein is Myc box-dependent-interacting protein 1 (BIN1) of Homo sapiens (Human).